We begin with the raw amino-acid sequence, 182 residues long: Peptidyl-prolyl cis-trans isomerase H (182 aa).

The PPIase cyclophilin-type domain occupies 15-181; sequence FFDITIGGEP…LDVVISQCGE (167 aa).

It belongs to the cyclophilin-type PPIase family. PPIase H subfamily.

The protein localises to the nucleus. It catalyses the reaction [protein]-peptidylproline (omega=180) = [protein]-peptidylproline (omega=0). Functionally, PPIases accelerate the folding of proteins. It catalyzes the cis-trans isomerization of proline imidic peptide bonds in oligopeptides. This is Peptidyl-prolyl cis-trans isomerase H (CYP3) from Gibberella zeae (strain ATCC MYA-4620 / CBS 123657 / FGSC 9075 / NRRL 31084 / PH-1) (Wheat head blight fungus).